A 449-amino-acid chain; its full sequence is Chromosomal replication initiator protein DnaA (449 aa).

The tract at residues 1–72 (MPNLEELWAY…VEGVYEFAQL (72 aa)) is domain I, interacts with DnaA modulators. The interval 72–109 (LEVDPVIMTKDELQPAPATDQRPAVEEDDQNLTFKAKT) is domain II. Residues 110-326 (HLNPKYTFDR…GALVRVQAFS (217 aa)) are domain III, AAA+ region. Residues glycine 154, glycine 156, lysine 157, and threonine 158 each contribute to the ATP site. The tract at residues 327–449 (TMKNEDITTS…ELRNILKNRG (123 aa)) is domain IV, binds dsDNA.

It belongs to the DnaA family. In terms of assembly, oligomerizes as a right-handed, spiral filament on DNA at oriC.

The protein localises to the cytoplasm. In terms of biological role, plays an essential role in the initiation and regulation of chromosomal replication. ATP-DnaA binds to the origin of replication (oriC) to initiate formation of the DNA replication initiation complex once per cell cycle. Binds the DnaA box (a 9 base pair repeat at the origin) and separates the double-stranded (ds)DNA. Forms a right-handed helical filament on oriC DNA; dsDNA binds to the exterior of the filament while single-stranded (ss)DNA is stabiized in the filament's interior. The ATP-DnaA-oriC complex binds and stabilizes one strand of the AT-rich DNA unwinding element (DUE), permitting loading of DNA polymerase. After initiation quickly degrades to an ADP-DnaA complex that is not apt for DNA replication. Binds acidic phospholipids. The polypeptide is Chromosomal replication initiator protein DnaA (Lacticaseibacillus casei (strain BL23) (Lactobacillus casei)).